The chain runs to 906 residues: Ectonucleotide pyrophosphatase/phosphodiesterase family member 1 (906 aa).

Residues 1–25 form a disordered region; sequence MERDGEQAGQGPRHGPAGNGRELES. At 1–58 the chain is on the cytoplasmic side; sequence MERDGEQAGQGPRHGPAGNGRELESPAAASLLAPMDLGEEPLEKAERARTAKDPNTYK. Ser-25 carries the phosphoserine modification. The Di-leucine motif signature appears at 27–34; it reads AAASLLAP. The chain crosses the membrane as a helical; Signal-anchor for type II membrane protein span at residues 59-79; it reads VLSLVLSVCVLTTILGCIFGL. Residues 80–906 lie on the Extracellular side of the membrane; it reads KPSCAKEVKS…THLPIFSQED (827 aa). 2 SMB domains span residues 86–126 and 127–170; these read EVKS…VEPT and HIWT…QEKK. 10 disulfides stabilise this stretch: Cys-90-Cys-104, Cys-94-Cys-122, Cys-102-Cys-115, Cys-108-Cys-114, Cys-131-Cys-148, Cys-136-Cys-166, Cys-146-Cys-159, Cys-152-Cys-158, Cys-177-Cys-223, and Cys-185-Cys-397. The N-linked (GlcNAc...) asparagine glycan is linked to Asn-161. The interval 173–573 is phosphodiesterase; the sequence is VEEACETIDA…APNNESHGSL (401 aa). 3 residues coordinate AMP: Asp-200, Thr-238, and Asn-259. Zn(2+)-binding residues include Asp-200 and Thr-238. The active-site AMP-threonine intermediate is Thr-238. CMP contacts are provided by Thr-238 and Asn-259. Residues Thr-238 and Asn-259 each contribute to the dTMP site. GMP contacts are provided by Thr-238 and Asn-259. A Phosphothreonine modification is found at Thr-238. Residue Asn-267 is glycosylated (N-linked (GlcNAc...) asparagine). Positions 272, 277, and 322 each coordinate GMP. Residues Lys-277 and Tyr-322 each contribute to the AMP site. 2 residues coordinate CMP: Lys-277 and Tyr-322. Tyr-322 lines the dTMP pocket. A glycan (N-linked (GlcNAc...) asparagine) is linked at Asn-323. Asp-358 is a binding site for AMP. Residues Asp-358, His-362, Asp-405, and His-406 each contribute to the Zn(2+) site. Residue Asp-358 participates in CMP binding. DTMP is bound at residue Asp-358. Residue Asp-358 participates in GMP binding. A 2',3'-cGAMP-binding site is contributed by His-362. His-406 contacts AMP. Position 406 (His-406) interacts with CMP. Residue His-406 participates in dTMP binding. His-406 contributes to the GMP binding site. Disulfide bonds link Cys-413–Cys-512, Cys-462–Cys-849, Cys-596–Cys-653, Cys-607–Cys-707, Cys-609–Cys-692, and Cys-819–Cys-829. N-linked (GlcNAc...) asparagine glycosylation occurs at Asn-459. Position 514 (Ser-514) interacts with 2',3'-cGAMP. His-517 is an AMP binding site. Residue His-517 coordinates Zn(2+). A CMP-binding site is contributed by His-517. Position 517 (His-517) interacts with dTMP. Position 517 (His-517) interacts with GMP. N-linked (GlcNAc...) asparagine glycosylation is found at Asn-567 and Asn-624. Residues 579 to 628 form a linker region; that stretch reads KPIYTPSHPKEESFLSQCPIKSVSSDLGCTCDPSIVPIMDFEKQFNLTTD. Residues 635-906 form a nuclease-like domain region; sequence SMTVPNGRPR…THLPIFSQED (272 aa). Asp-781, Asp-783, Asp-785, Arg-787, and Asp-789 together coordinate Ca(2+).

The protein belongs to the nucleotide pyrophosphatase/phosphodiesterase family. As to quaternary structure, ectonucleotide pyrophosphatase/phosphodiesterase family member 1: Homodimer. Ectonucleotide pyrophosphatase/phosphodiesterase family member 1: Interacts with INSR; leading to inhibit INSR autophosphorylation and subsequent activation of INSR kinase activity. Ectonucleotide pyrophosphatase/phosphodiesterase family member 1, secreted form: Monomeric. Zn(2+) is required as a cofactor. Post-translationally, the secreted form is produced through cleavage at Lys-85 by intracellular processing.

It localises to the cell membrane. Its subcellular location is the basolateral cell membrane. It is found in the secreted. It carries out the reaction Hydrolytically removes 5'-nucleotides successively from the 3'-hydroxy termini of 3'-hydroxy-terminated oligonucleotides.. The catalysed reaction is a ribonucleoside 5'-triphosphate + H2O = a ribonucleoside 5'-phosphate + diphosphate + H(+). The enzyme catalyses ATP + H2O = AMP + diphosphate + H(+). It catalyses the reaction UTP + H2O = UMP + diphosphate + H(+). It carries out the reaction GTP + H2O = GMP + diphosphate + H(+). The catalysed reaction is CTP + H2O = CMP + diphosphate + H(+). The enzyme catalyses 2',3'-cGAMP + 2 H2O = GMP + AMP + 2 H(+). It catalyses the reaction P(1),P(4)-bis(5'-adenosyl) tetraphosphate + H2O = AMP + ATP + 2 H(+). It carries out the reaction 3',5'-cyclic AMP + H2O = AMP + H(+). With respect to regulation, at low concentrations of ATP, a phosphorylated intermediate is formed which inhibits further hydrolysis. Nucleotide pyrophosphatase that generates diphosphate (PPi) and functions in bone mineralization and soft tissue calcification by regulating pyrophosphate levels. PPi inhibits bone mineralization and soft tissue calcification by binding to nascent hydroxyapatite crystals, thereby preventing further growth of these crystals. Preferentially hydrolyzes ATP, but can also hydrolyze other nucleoside 5' triphosphates such as GTP, CTP and UTP to their corresponding monophosphates with release of pyrophosphate, as well as diadenosine polyphosphates, and also 3',5'-cAMP to AMP. May also be involved in the regulation of the availability of nucleotide sugars in the endoplasmic reticulum and Golgi, and the regulation of purinergic signaling. Inhibits ectopic joint calcification and maintains articular chondrocytes by repressing hedgehog signaling; it is however unclear whether hedgehog inhibition is direct or indirect. Appears to modulate insulin sensitivity. Also involved in melanogenesis. Also able to hydrolyze 2',3'-cGAMP (cyclic GMP-AMP), a second messenger that activates TMEM173/STING and triggers type-I interferon production. 2',3'-cGAMP degradation takes place in the lumen or extracellular space, and not in the cytosol where it is produced; the role of 2',3'-cGAMP hydrolysis is therefore unclear. Not able to hydrolyze the 2',3'-cGAMP linkage isomer 3'-3'-cGAMP. In Rattus norvegicus (Rat), this protein is Ectonucleotide pyrophosphatase/phosphodiesterase family member 1.